We begin with the raw amino-acid sequence, 734 residues long: Monosaccharide-sensing protein 1 (734 aa).

6 helical membrane passes run 6–26 (LVAL…ATIA), 44–64 (GLVV…SGPI), 79–99 (VMYF…VLCF), 102–122 (LLNG…ISET), 133–153 (TLPQ…VFTM), and 163–183 (AMLG…VFYL). Residues 351-403 (YNKDNDDYATDDGAGDDDDSDNDLRSPLMSRQTTSMDKDMIPHPTSGSTLSMR) are disordered. The segment covering 357-371 (DYATDDGAGDDDDSD) has biased composition (acidic residues). A phosphoserine mark is found at Ser446 and Ser480. 6 helical membrane passes run 510–530 (ALVV…NGVL), 556–576 (ASFL…VVAM), 588–608 (LLWT…SELI), 621–641 (GCVV…PNIL), 653–673 (LCIA…TYSL), and 680–700 (IGLV…WIFV).

It belongs to the major facilitator superfamily. Sugar transporter (TC 2.A.1.1) family. In terms of assembly, binds to VIK at the tonoplast. In terms of processing, phosphorylated by VIK; this activation promotes carrier activity. In terms of tissue distribution, mostly expressed in juvenile and adult leaves, to a lower extent, in flower tissues, and, at low levels, in roots and stems.

The protein resides in the vacuole membrane. It carries out the reaction D-glucose(out) + H(+)(in) = D-glucose(in) + H(+)(out). The catalysed reaction is sucrose(out) + H(+)(in) = sucrose(in) + H(+)(out). With respect to regulation, enhanced activation by VIK-mediated phosphorylation promoting carrier activity and consequently vacuolar sugar accumulation. Functionally, sugar proton-coupled antiporter which contributes to vacuolar sugar import (e.g. monosaccharides including glucose, sucrose and fructose), particularly during stress responses (e.g. in response to cold). Required for cytosolic glucose homeostasis. This is Monosaccharide-sensing protein 1 from Arabidopsis thaliana (Mouse-ear cress).